The primary structure comprises 53 residues: uncharacterized protein (53 aa).

The helical transmembrane segment at 24-44 (LMTFIAVNAVLSLILIRAVIL) threads the bilayer.

It localises to the membrane. This is an uncharacterized protein from Methanocaldococcus jannaschii (strain ATCC 43067 / DSM 2661 / JAL-1 / JCM 10045 / NBRC 100440) (Methanococcus jannaschii).